The chain runs to 327 residues: Solute-binding protein SPO1773 (327 aa).

An N-terminal signal peptide occupies residues 1–26; sequence MTISFKGLARGVACAALVLAALPAAA. Residues 39-41, Arg-150, 170-172, and Asp-211 each bind 3-hydroxybenzoate; these read HTW and RIT.

This sequence belongs to the bacterial solute-binding protein 7 family. The complex is comprised of an extracytoplasmic solute-binding protein and a heteromeric permease formed by two transmembrane proteins.

It is found in the periplasm. In terms of biological role, solute-binding protein that binds 3,4-dihydroxybenzoate and 3-hydroxybenzoate (in vitro). Probably part of a tripartite ATP-independent periplasmic (TRAP) transport system that mediates solute transport into the cytoplasm. The protein is Solute-binding protein SPO1773 of Ruegeria pomeroyi (strain ATCC 700808 / DSM 15171 / DSS-3) (Silicibacter pomeroyi).